A 70-amino-acid polypeptide reads, in one-letter code: uncharacterized protein (70 aa).

The region spanning 5 to 59 (IREFRAKYGMTQEELAKKVGVRRETIVFLEKGKYNPSLRLAYKIARVFNARIEDL) is the HTH cro/C1-type domain. Positions 16-35 (QEELAKKVGVRRETIVFLEK) form a DNA-binding region, H-T-H motif.

This is an uncharacterized protein from Archaeoglobus fulgidus (strain ATCC 49558 / DSM 4304 / JCM 9628 / NBRC 100126 / VC-16).